Consider the following 201-residue polypeptide: FMN-dependent NADH:quinone oxidoreductase (201 aa).

Residues S9 and 93–96 (MYNF) contribute to the FMN site.

Belongs to the azoreductase type 1 family. In terms of assembly, homodimer. FMN serves as cofactor.

The enzyme catalyses 2 a quinone + NADH + H(+) = 2 a 1,4-benzosemiquinone + NAD(+). It catalyses the reaction N,N-dimethyl-1,4-phenylenediamine + anthranilate + 2 NAD(+) = 2-(4-dimethylaminophenyl)diazenylbenzoate + 2 NADH + 2 H(+). Functionally, quinone reductase that provides resistance to thiol-specific stress caused by electrophilic quinones. Also exhibits azoreductase activity. Catalyzes the reductive cleavage of the azo bond in aromatic azo compounds to the corresponding amines. The sequence is that of FMN-dependent NADH:quinone oxidoreductase from Bradyrhizobium sp. (strain BTAi1 / ATCC BAA-1182).